Reading from the N-terminus, the 469-residue chain is MEAQTLYEKLWSSHVVHQEADGTALIYIDRHLVHEVTSPQAFEGLKLAGRKPWRISSIVATADHNIPTDHWEMGIQDPVSRQQVETLDANIREVGSLAYFPFKDQRQGIIHVIGPENGTTLPGMTVVCGDSHTSTHGAFACLAHGIGTSEVEHVMATQCLLQKKSKTMLIKVEGTLGRGVTAKDVVLAIIGRIGTAGGTGYAIEFGGSAIRSLSMEGRMTVCNMAIEAGARAGLVAVDETTIDYLKDKPFAPKGPQWDAAVAYWRTLKSDDGATFDTVVELDATSILPQVTWGTSPEMVTTVDGRVPDPAAIADPVKREGVERALKYMGLAPNTPISEIAVDQVFIGSCTNSRIEDLREAAAVVKGRSKAASVRRVLVVPGSGLVKHQAEAEGLDKVFIEAGFEWREPGCSMCLAMNADRLEPGERCASTSNRNFEGRQGAGGRTHLVSPAMAAAAAVTGHFTDVRTLN.

Residues C349, C410, and C413 each contribute to the [4Fe-4S] cluster site.

This sequence belongs to the aconitase/IPM isomerase family. LeuC type 1 subfamily. As to quaternary structure, heterodimer of LeuC and LeuD. [4Fe-4S] cluster serves as cofactor.

The enzyme catalyses (2R,3S)-3-isopropylmalate = (2S)-2-isopropylmalate. It participates in amino-acid biosynthesis; L-leucine biosynthesis; L-leucine from 3-methyl-2-oxobutanoate: step 2/4. Its function is as follows. Catalyzes the isomerization between 2-isopropylmalate and 3-isopropylmalate, via the formation of 2-isopropylmaleate. The polypeptide is 3-isopropylmalate dehydratase large subunit (Azoarcus sp. (strain BH72)).